The chain runs to 374 residues: Anhydro-N-acetylmuramic acid kinase (374 aa).

Residue 12 to 19 (GTSLDGID) coordinates ATP.

This sequence belongs to the anhydro-N-acetylmuramic acid kinase family.

The catalysed reaction is 1,6-anhydro-N-acetyl-beta-muramate + ATP + H2O = N-acetyl-D-muramate 6-phosphate + ADP + H(+). Its pathway is amino-sugar metabolism; 1,6-anhydro-N-acetylmuramate degradation. The protein operates within cell wall biogenesis; peptidoglycan recycling. Catalyzes the specific phosphorylation of 1,6-anhydro-N-acetylmuramic acid (anhMurNAc) with the simultaneous cleavage of the 1,6-anhydro ring, generating MurNAc-6-P. Is required for the utilization of anhMurNAc either imported from the medium or derived from its own cell wall murein, and thus plays a role in cell wall recycling. The sequence is that of Anhydro-N-acetylmuramic acid kinase from Klebsiella pneumoniae subsp. pneumoniae (strain ATCC 700721 / MGH 78578).